Reading from the N-terminus, the 705-residue chain is Phycobiliprotein ApcE (705 aa).

A phycobilin-like 1 region spans residues 18–76 (QTVPGSTIVQAEQQDRFPQQGELRELSSYFQSGLKRLAIAEIITRNSDTIVSRAANRIF). The tract at residues 77–145 (VGGSPLAYIE…VRIPSGFRPI (69 aa)) is phycobilin-like loop. The phycobilin-like 2 stretch occupies residues 146–238 (NVARYGPRNM…YFDVLIREFE (93 aa)). Cys196 serves as a coordination point for (2R,3E)-phycocyanobilin. 2 consecutive PBS-linker domains span residues 253 to 433 (DQQG…FVKV) and 514 to 691 (KIFK…SLRP). Residues 685 to 705 (VKASLRPAAGAQERRPEVGRR) are disordered. Over residues 696–705 (QERRPEVGRR) the composition is skewed to basic and acidic residues.

The protein belongs to the phycobilisome linker protein family. As to quaternary structure, phycobilisomes of this organism are composed of a two cylinder core, from which six rods radiate. The core is mainly composed of allophycocyanin alpha and beta chains, and of three minor components: the allophycocyanin alpha-B chain, a 18.3 kDa polypeptide, and the anchor polypeptide L-CM. Post-translationally, contains one covalently linked bilin chromophore. This protein autochromophorylates.

It is found in the cellular thylakoid membrane. Its function is as follows. This protein is postulated to act both as terminal energy acceptor (by its phycobilin-like domains) and as a linker polypeptide (by its repeats and arms) that stabilizes the phycobilisome core architecture. Has intrinsic bilin lyase activity. The protein is Phycobiliprotein ApcE (apcE) of Synechococcus sp. (strain ATCC 27144 / PCC 6301 / SAUG 1402/1) (Anacystis nidulans).